The primary structure comprises 164 residues: ATP synthase subunit b 1 (164 aa).

The helical transmembrane segment at 8–28 (AETWVAVGFAILMVVFVYFGV) threads the bilayer.

The protein belongs to the ATPase B chain family. In terms of assembly, F-type ATPases have 2 components, F(1) - the catalytic core - and F(0) - the membrane proton channel. F(1) has five subunits: alpha(3), beta(3), gamma(1), delta(1), epsilon(1). F(0) has three main subunits: a(1), b(2) and c(10-14). The alpha and beta chains form an alternating ring which encloses part of the gamma chain. F(1) is attached to F(0) by a central stalk formed by the gamma and epsilon chains, while a peripheral stalk is formed by the delta and b chains.

It is found in the cell inner membrane. Functionally, f(1)F(0) ATP synthase produces ATP from ADP in the presence of a proton or sodium gradient. F-type ATPases consist of two structural domains, F(1) containing the extramembraneous catalytic core and F(0) containing the membrane proton channel, linked together by a central stalk and a peripheral stalk. During catalysis, ATP synthesis in the catalytic domain of F(1) is coupled via a rotary mechanism of the central stalk subunits to proton translocation. Its function is as follows. Component of the F(0) channel, it forms part of the peripheral stalk, linking F(1) to F(0). The polypeptide is ATP synthase subunit b 1 (Rhodopseudomonas palustris (strain BisA53)).